The primary structure comprises 362 residues: Peptide chain release factor 1 (362 aa).

Q237 is subject to N5-methylglutamine. The segment covering 282–296 (QQEEDKRRAEADSTR) has biased composition (basic and acidic residues). The interval 282–304 (QQEEDKRRAEADSTRRSILSTGD) is disordered.

Belongs to the prokaryotic/mitochondrial release factor family. Post-translationally, methylated by PrmC. Methylation increases the termination efficiency of RF1.

It is found in the cytoplasm. Its function is as follows. Peptide chain release factor 1 directs the termination of translation in response to the peptide chain termination codons UAG and UAA. In Tolumonas auensis (strain DSM 9187 / NBRC 110442 / TA 4), this protein is Peptide chain release factor 1.